The chain runs to 228 residues: Ribonuclease S-4 (228 aa).

The N-terminal stretch at 1–27 (MGITGMTYMFTMVLSLIVLIFSASTVG) is a signal peptide. Gln-36 contributes to the RNA binding site. An intrachain disulfide couples Cys-42 to Cys-49. RNA is bound at residue His-60. The Proton donor role is filled by His-60. A disulfide bridge links Cys-75 with Cys-119. N-linked (GlcNAc) asparagine glycosylation is present at Asn-87. 98 to 99 (NV) lines the RNA pocket. A glycan (N-linked (GlcNAc...) asparagine) is linked at Asn-101. Residues Phe-108, 111–112 (RE), and 115–116 (KH) each bind RNA. Glu-112 is a catalytic residue. His-116 serves as the catalytic Proton acceptor. Asn-144, Asn-160, and Asn-175 each carry an N-linked (GlcNAc...) asparagine glycan. Cystine bridges form between Cys-183–Cys-222 and Cys-199–Cys-210.

It belongs to the RNase T2 family. In terms of processing, the N-glycans attached at Asn-101, Asn-160 and Asn-175 consist predominantly of disaccharide (GlcNAc-GlcNAc). The N-glycan at 87 is 53% monosaccharide and 47% disaccharide. The N-glycan at Asn-144 contains mannose and xylose.

The protein resides in the secreted. It localises to the extracellular space. The catalysed reaction is a ribonucleotidyl-ribonucleotide-RNA + H2O = a 3'-end 3'-phospho-ribonucleotide-RNA + a 5'-end dephospho-ribonucleoside-RNA + H(+). Self-incompatibility (SI) is the inherited ability of a flowering plant to prevent self-fertilization by discriminating between self and non-self pollen during pollination. In many species, self-incompatibility is controlled by the single, multiallelic locus S. This Pyrus pyrifolia (Chinese pear) protein is Ribonuclease S-4.